Consider the following 119-residue polypeptide: FAD-linked sulfhydryl oxidase (119 aa).

The ERV/ALR sulfhydryl oxidase domain maps to 1–97 (MLHWGPKFWR…ISWSEYKNIY (97 aa)). A disulfide bridge connects residues Cys-44 and Cys-47.

The protein belongs to the asfivirus B119L family. In terms of assembly, interacts with A151R. FAD serves as cofactor.

The protein resides in the host cytoplasm. The protein localises to the virion. It carries out the reaction 2 R'C(R)SH + O2 = R'C(R)S-S(R)CR' + H2O2. Its function is as follows. FAD-dependent sulfhydryl oxidase that catalyzes the formation of disulfide bonds in viral proteins produced in the cell cytoplasm. The sequence is that of FAD-linked sulfhydryl oxidase from Ornithodoros (relapsing fever ticks).